A 1008-amino-acid chain; its full sequence is Collagen alpha-1(I) chain (1008 aa).

The disordered stretch occupies residues 1–1008 (GGISVPGPMG…PGPPGPPGPP (1008 aa)). Proline 18, proline 21, proline 23, proline 32, proline 35, proline 38, proline 52, proline 67, proline 73, proline 82, and proline 88 each carry 4-hydroxyproline. Basic and acidic residues predominate over residues 55 to 69 (NGDDGEAGKPGRPGE). A 5-hydroxylysine; alternate modification is found at lysine 91. An O-linked (Gal...) hydroxylysine; alternate glycan is attached at lysine 91. At serine 97 the chain carries Phosphoserine. The span at 105–121 (DAGPAGPKGEPGSPGEN) shows a compositional bias: low complexity. 4-hydroxyproline occurs at positions 115, 118, 124, 133, 139, 160, 169, 172, 199, 202, 214, 220, 229, 235, and 238. The segment covering 139-157 (PGASGPAGARGNDGAAGAA) has biased composition (low complexity). The span at 159-171 (PPGPTGPAGPPGF) shows a compositional bias: pro residues. The segment covering 205 to 235 (AGAAGPAGNPGADGQPGAKGANGAPGIAGAP) has biased composition (low complexity). Over residues 236–255 (GFPGRGPSGPQGPSGPGPKG) the composition is skewed to gly residues. The residue at position 254 (lysine 254) is a 5-hydroxylysine. 8 positions are modified to 4-hydroxyproline: proline 260, proline 263, proline 275, proline 284, proline 299, proline 305, proline 314, and proline 320. Residues 309–318 (GERGGPGSRG) are compositionally biased toward gly residues. Lysine 329 is subject to 5-hydroxylysine. A 4-hydroxyproline mark is found at proline 338, proline 347, proline 353, proline 359, proline 368, proline 371, proline 380, proline 389, proline 395, proline 407, proline 416, proline 425, proline 428, proline 446, proline 463, proline 469, proline 475, proline 481, proline 487, proline 493, proline 505, proline 514, proline 523, proline 535, proline 538, proline 544, proline 550, and proline 559. Positions 362–388 (KGLTGSPGSPGPDGKTGPPGPAGQDGR) are enriched in low complexity. The segment covering 397 to 416 (ARGQAGVMGFPGPKGAAGEP) has biased composition (low complexity). Over residues 475-484 (PGEAGKPGEQ) the composition is skewed to low complexity. Positions 519–547 (PRGAPGNDGAKGDAGAPGAPGSQGAPGLQ) are enriched in low complexity. Lysine 571 is subject to 5-hydroxylysine. Residues proline 577, proline 592, and proline 598 each carry the 4-hydroxyproline modification. Residues 604–618 (SGPSGPAGPTGARGA) show a composition bias toward low complexity. Position 607 is a phosphoserine (serine 607). Residues proline 619, proline 625, proline 628, proline 637, proline 643, proline 661, proline 670, and proline 679 each carry the 4-hydroxyproline modification. Residues 631–658 (AGFAGPPGADGQPGAKGEPGDAGAKGDA) are compositionally biased toward low complexity. Residues 660-672 (PPGPAGPTGPPGP) show a composition bias toward pro residues. At lysine 682 the chain carries 5-hydroxylysine. Low complexity predominate over residues 687-703 (SAGPPGATGFPGAAGRV). Proline 691 and proline 697 each carry 4-hydroxyproline. At proline 705 the chain carries 3-hydroxyproline. Residues proline 706, proline 717, proline 738, proline 747, proline 755, proline 764, proline 781, proline 790, proline 793, proline 799, proline 814, proline 820, proline 826, proline 835, and proline 841 each carry the 4-hydroxyproline modification. Residues 731–740 (ETGPAGRPGE) are compositionally biased toward low complexity. The span at 752 to 764 (KGSPGADGPAGAP) shows a compositional bias: low complexity. Residues 813 to 823 (PPGPVGPPGLA) are compositionally biased toward pro residues. Residues 825 to 840 (PPGESGREGSPGAEGS) are compositionally biased toward low complexity. 5-hydroxylysine is present on lysine 850. Positions 858–873 (PGPPGAPGAPGAPGPV) are enriched in pro residues. Residues proline 861, proline 864, and proline 867 each carry the 4-hydroxyproline modification. Positions 894–908 (AGPAGARGPAGPQGP) are enriched in low complexity. The span at 909–923 (RGDKGETGEQGDRGI) shows a compositional bias: basic and acidic residues. Lysine 912 is subject to 5-hydroxylysine. Lysine 924 is subject to 5-hydroxylysine; alternate. Lysine 924 carries O-linked (Gal...) hydroxylysine; alternate glycosylation. 4-hydroxyproline occurs at positions 939, 942, 960, and 975. The span at 942–975 (PGEQGPSGASGPAGPRGPPGSAGSPGKDGLNGLP) shows a compositional bias: low complexity. Proline 980 is subject to 3-hydroxyproline. The residue at position 981 (proline 981) is a 4-hydroxyproline. Over residues 993-1008 (VGPPGPPGPPGPPGPP) the composition is skewed to pro residues. 3-hydroxyproline is present on proline 995. Proline 996 bears the 4-hydroxyproline mark. Proline 998 bears the 3-hydroxyproline mark. Proline 999 is modified (4-hydroxyproline). Proline 1001 carries the post-translational modification 3-hydroxyproline. 4-hydroxyproline is present on residues proline 1002, proline 1005, and proline 1008.

It belongs to the fibrillar collagen family. In terms of assembly, trimers of one alpha 2(I) and two alpha 1(I) chains. Contains mostly 4-hydroxyproline. Proline residues at the third position of the tripeptide repeating unit (G-X-Y) are hydroxylated in some or all of the chains. In terms of processing, contains 3-hydroxyproline at a few sites. This modification occurs on the first proline residue in the sequence motif Gly-Pro-Hyp, where Hyp is 4-hydroxyproline. Post-translationally, lysine residues at the third position of the tripeptide repeating unit (G-X-Y) are 5-hydroxylated in some or all of the chains. O-glycosylated on hydroxylated lysine residues. The O-linked glycan consists of a Glc-Gal disaccharide. As to expression, expressed in bones.

It is found in the secreted. The protein resides in the extracellular space. It localises to the extracellular matrix. Its function is as follows. Type I collagen is a member of group I collagen (fibrillar forming collagen). This is Collagen alpha-1(I) chain from Paramylodon harlani (Harlan's ground sloth).